A 304-amino-acid chain; its full sequence is NADH-cytochrome b5 reductase 2 (304 aa).

The chain crosses the membrane as a helical span at residues 9-29 (MLVALAVIGVTVLLFLIKALG). Positions 43–155 (NAKYPLPLIE…RGPNGLLVYK (113 aa)) constitute an FAD-binding FR-type domain. FAD is bound by residues 135 to 150 (DSLK…GPNG) and 174 to 209 (VAKH…KCSL).

Belongs to the flavoprotein pyridine nucleotide cytochrome reductase family. FAD is required as a cofactor.

Its subcellular location is the membrane. The catalysed reaction is 2 Fe(III)-[cytochrome b5] + NADH = 2 Fe(II)-[cytochrome b5] + NAD(+) + H(+). Its function is as follows. NADH-cytochrome b5 reductases are involved in desaturation and elongation of fatty acids, cholesterol biosynthesis and drug metabolism. The chain is NADH-cytochrome b5 reductase 2 (cyb5r2) from Xenopus tropicalis (Western clawed frog).